We begin with the raw amino-acid sequence, 118 residues long: Protein Rev (118 aa).

Ser5 and Ser8 each carry phosphoserine; by host CK2. A homomultimerization region spans residues Leu18–Asp28. Positions Tyr23–Arg52 are disordered. A Nuclear localization signal and RNA-binding (RRE) motif is present at residues Thr36–Arg52. Positions Gln38–Glu49 are enriched in basic residues. The short motif at Leu75 to Asp86 is the Nuclear export signal and binding to XPO1 element. The disordered stretch occupies residues Gly92–Glu118. Residues Ser94 and Ser101 each carry the phosphoserine; by host modification.

The protein belongs to the HIV-1 REV protein family. As to quaternary structure, homomultimer; when bound to the RRE. Multimeric assembly is essential for activity and may involve XPO1. Binds to human KPNB1, XPO1, TNPO1, RANBP5 and IPO7. Interacts with the viral Integrase. Interacts with human KHDRBS1. Interacts with human NAP1; this interaction decreases Rev multimerization and stimulates its activity. Interacts with human DEAD-box helicases DDX3 and DDX24; these interactions may serve for viral RNA export to the cytoplasm and packaging, respectively. Interacts with human PSIP1; this interaction may inhibit HIV-1 DNA integration by promoting dissociation of the Integrase-LEDGF/p75 complex. Asymmetrically arginine dimethylated at one site by host PRMT6. Methylation impairs the RNA-binding activity and export of viral RNA from the nucleus to the cytoplasm. Post-translationally, phosphorylated by protein kinase CK2. Presence of, and maybe binding to the N-terminus of the regulatory beta subunit of CK2 is necessary for CK2-mediated Rev's phosphorylation.

Its subcellular location is the host nucleus. The protein localises to the host nucleolus. It is found in the host cytoplasm. In terms of biological role, escorts unspliced or incompletely spliced viral pre-mRNAs (late transcripts) out of the nucleus of infected cells. These pre-mRNAs carry a recognition sequence called Rev responsive element (RRE) located in the env gene, that is not present in fully spliced viral mRNAs (early transcripts). This function is essential since most viral proteins are translated from unspliced or partially spliced pre-mRNAs which cannot exit the nucleus by the pathway used by fully processed cellular mRNAs. Rev itself is translated from a fully spliced mRNA that readily exits the nucleus. Rev's nuclear localization signal (NLS) binds directly to KPNB1/Importin beta-1 without previous binding to KPNA1/Importin alpha-1. KPNB1 binds to the GDP bound form of RAN (Ran-GDP) and targets Rev to the nucleus. In the nucleus, the conversion from Ran-GDP to Ran-GTP dissociates Rev from KPNB1 and allows Rev's binding to the RRE in viral pre-mRNAs. Rev multimerization on the RRE via cooperative assembly exposes its nuclear export signal (NES) to the surface. Rev can then form a complex with XPO1/CRM1 and Ran-GTP, leading to nuclear export of the complex. Conversion from Ran-GTP to Ran-GDP mediates dissociation of the Rev/RRE/XPO1/RAN complex, so that Rev can return to the nucleus for a subsequent round of export. Beside KPNB1, also seems to interact with TNPO1/Transportin-1, RANBP5/IPO5 and IPO7/RANBP7 for nuclear import. The nucleoporin-like HRB/RIP is an essential cofactor that probably indirectly interacts with Rev to release HIV RNAs from the perinuclear region to the cytoplasm. The chain is Protein Rev from Human immunodeficiency virus type 1 group M subtype B (isolate LW123) (HIV-1).